The following is a 188-amino-acid chain: dCTP deaminase (188 aa).

Residues 111-116, 135-137, Q156, Y170, and Q180 each bind dCTP; these read KSTYAR and TLE. E137 acts as the Proton donor/acceptor in catalysis.

This sequence belongs to the dCTP deaminase family. As to quaternary structure, homotrimer.

The enzyme catalyses dCTP + H2O + H(+) = dUTP + NH4(+). The protein operates within pyrimidine metabolism; dUMP biosynthesis; dUMP from dCTP (dUTP route): step 1/2. In terms of biological role, catalyzes the deamination of dCTP to dUTP. The sequence is that of dCTP deaminase from Neisseria gonorrhoeae (strain ATCC 700825 / FA 1090).